The chain runs to 223 residues: Protein-L-isoaspartate O-methyltransferase (223 aa).

Serine 70 is an active-site residue.

The protein belongs to the methyltransferase superfamily. L-isoaspartyl/D-aspartyl protein methyltransferase family.

Its subcellular location is the cytoplasm. It carries out the reaction [protein]-L-isoaspartate + S-adenosyl-L-methionine = [protein]-L-isoaspartate alpha-methyl ester + S-adenosyl-L-homocysteine. Functionally, catalyzes the methyl esterification of L-isoaspartyl residues in peptides and proteins that result from spontaneous decomposition of normal L-aspartyl and L-asparaginyl residues. It plays a role in the repair and/or degradation of damaged proteins. The chain is Protein-L-isoaspartate O-methyltransferase from Saccharophagus degradans (strain 2-40 / ATCC 43961 / DSM 17024).